The following is a 237-amino-acid chain: Phosphoribosylaminoimidazole-succinocarboxamide synthase (237 aa).

It belongs to the SAICAR synthetase family.

It carries out the reaction 5-amino-1-(5-phospho-D-ribosyl)imidazole-4-carboxylate + L-aspartate + ATP = (2S)-2-[5-amino-1-(5-phospho-beta-D-ribosyl)imidazole-4-carboxamido]succinate + ADP + phosphate + 2 H(+). It functions in the pathway purine metabolism; IMP biosynthesis via de novo pathway; 5-amino-1-(5-phospho-D-ribosyl)imidazole-4-carboxamide from 5-amino-1-(5-phospho-D-ribosyl)imidazole-4-carboxylate: step 1/2. The chain is Phosphoribosylaminoimidazole-succinocarboxamide synthase from Idiomarina loihiensis (strain ATCC BAA-735 / DSM 15497 / L2-TR).